A 172-amino-acid polypeptide reads, in one-letter code: Phosphopantetheine adenylyltransferase (172 aa).

Threonine 13 contributes to the substrate binding site. Residues 13 to 14 and histidine 21 contribute to the ATP site; that span reads TF. Substrate is bound by residues lysine 45, leucine 81, and arginine 95. Residues 96–98, glutamate 106, and 131–137 contribute to the ATP site; these read GLR and SQFISSR.

Belongs to the bacterial CoaD family. As to quaternary structure, homohexamer. It depends on Mg(2+) as a cofactor.

The protein resides in the cytoplasm. The enzyme catalyses (R)-4'-phosphopantetheine + ATP + H(+) = 3'-dephospho-CoA + diphosphate. Its pathway is cofactor biosynthesis; coenzyme A biosynthesis; CoA from (R)-pantothenate: step 4/5. Its function is as follows. Reversibly transfers an adenylyl group from ATP to 4'-phosphopantetheine, yielding dephospho-CoA (dPCoA) and pyrophosphate. This chain is Phosphopantetheine adenylyltransferase, found in Rhodospirillum rubrum (strain ATCC 11170 / ATH 1.1.1 / DSM 467 / LMG 4362 / NCIMB 8255 / S1).